A 485-amino-acid polypeptide reads, in one-letter code: Beta-amyrin 28-monooxygenase CYP716A378 (485 aa).

Residues 3 to 23 (LFFICGLVLFSTLSLISLFLL) traverse the membrane as a helical; Signal-anchor for type II membrane protein segment. N-linked (GlcNAc...) asparagine glycans are attached at residues asparagine 25 and asparagine 386. Heme is bound at residue cysteine 426.

Belongs to the cytochrome P450 family. Heme serves as cofactor. As to expression, mainly expressed in flowers and flower buds, to a lesser extent in young leaves and, at low levels, in old leaves, stems and roots.

The protein localises to the membrane. It carries out the reaction beta-amyrin + 3 reduced [NADPH--hemoprotein reductase] + 3 O2 = oleanolate + 3 oxidized [NADPH--hemoprotein reductase] + 4 H2O + 4 H(+). The protein operates within secondary metabolite biosynthesis; terpenoid biosynthesis. Component of the oleanane-type triterpene saponins (e.g. saponarioside A and saponarioside B) biosynthetic pathway, leading to the production of natural products with detergent properties used as traditional sources of soap. An oxidoreductase that facilitates the oxidation of the methyl group to a carboxyl group at the C-28 position of beta-amyrin, resulting in the formation of oleanolate. This is Beta-amyrin 28-monooxygenase CYP716A378 from Saponaria officinalis (Common soapwort).